Here is a 284-residue protein sequence, read N- to C-terminus: Pantothenate synthetase (284 aa).

30–37 (MGNLHDGH) contacts ATP. His-37 (proton donor) is an active-site residue. Residue Gln-61 participates in (R)-pantoate binding. A beta-alanine-binding site is contributed by Gln-61. 149–152 (GEKD) contributes to the ATP binding site. Residue Gln-155 participates in (R)-pantoate binding. Residues Ile-178 and 186–189 (LSSR) each bind ATP.

It belongs to the pantothenate synthetase family. As to quaternary structure, homodimer.

The protein localises to the cytoplasm. It catalyses the reaction (R)-pantoate + beta-alanine + ATP = (R)-pantothenate + AMP + diphosphate + H(+). It functions in the pathway cofactor biosynthesis; (R)-pantothenate biosynthesis; (R)-pantothenate from (R)-pantoate and beta-alanine: step 1/1. Functionally, catalyzes the condensation of pantoate with beta-alanine in an ATP-dependent reaction via a pantoyl-adenylate intermediate. This is Pantothenate synthetase from Salmonella paratyphi A (strain ATCC 9150 / SARB42).